A 393-amino-acid chain; its full sequence is Dihydrolipoyllysine-residue succinyltransferase component of 2-oxoglutarate dehydrogenase complex (393 aa).

The Lipoyl-binding domain occupies 3–78; it reads RINILVPDLP…KSNQILGNIV (76 aa). Lysine 44 carries the post-translational modification N6-lipoyllysine. Active-site residues include histidine 364 and aspartate 368.

It belongs to the 2-oxoacid dehydrogenase family. As to quaternary structure, forms a 24-polypeptide structural core with octahedral symmetry. Part of the 2-oxoglutarate dehydrogenase (OGDH) complex composed of E1 (2-oxoglutarate dehydrogenase), E2 (dihydrolipoamide succinyltransferase) and E3 (dihydrolipoamide dehydrogenase); the complex contains multiple copies of the three enzymatic components (E1, E2 and E3). (R)-lipoate is required as a cofactor.

The enzyme catalyses N(6)-[(R)-dihydrolipoyl]-L-lysyl-[protein] + succinyl-CoA = N(6)-[(R)-S(8)-succinyldihydrolipoyl]-L-lysyl-[protein] + CoA. Its pathway is amino-acid degradation; L-lysine degradation via saccharopine pathway; glutaryl-CoA from L-lysine: step 6/6. In terms of biological role, E2 component of the 2-oxoglutarate dehydrogenase (OGDH) complex which catalyzes the second step in the conversion of 2-oxoglutarate to succinyl-CoA and CO(2). This chain is Dihydrolipoyllysine-residue succinyltransferase component of 2-oxoglutarate dehydrogenase complex (sucB), found in Buchnera aphidicola subsp. Schizaphis graminum (strain Sg).